The chain runs to 336 residues: Alpha-N-acetylgalactosaminide alpha-2,6-sialyltransferase 5 (336 aa).

Residues 1–8 (MKTLMRHG) lie on the Cytoplasmic side of the membrane. The chain crosses the membrane as a helical; Signal-anchor for type II membrane protein span at residues 9–29 (LAVCLALTTMCTSLLLVYSSL). The Lumenal segment spans residues 30-336 (GGQKERPPQQ…INHPENKPVF (307 aa)). The interval 32–81 (QKERPPQQQQQQQQQQQQASATGSSQPAAESSTQQRPGVPAGPRPLDGYL) is disordered. Positions 38–49 (QQQQQQQQQQQQ) are enriched in low complexity. Over residues 50–67 (ASATGSSQPAAESSTQQR) the composition is skewed to polar residues. An intrachain disulfide couples cysteine 96 to cysteine 245. N-linked (GlcNAc...) asparagine glycans are attached at residues asparagine 137 and asparagine 161.

It belongs to the glycosyltransferase 29 family.

The protein localises to the golgi apparatus membrane. The catalysed reaction is a ganglioside GM1b (d18:1(4E)) + CMP-N-acetyl-beta-neuraminate = a ganglioside GD1alpha (d18:1(4E)) + CMP + H(+). The enzyme catalyses N-acetyl-alpha-neuraminosyl-(2-&gt;3)-beta-D-galactosyl-(1-&gt;3)-N-acetyl-beta-D-glucosaminyl-(1-&gt;3)-beta-D-galactosyl-(1-&gt;4)-beta-D-glucosyl-(1&lt;-&gt;1')-N-acyl-sphing-4-enine + CMP-N-acetyl-beta-neuraminate = N-acetyl-alpha-neuraminosyl-(2-&gt;3)-beta-D-galactosyl-(1-&gt;3)-[N-acetyl-alpha-neuraminosyl-(2-&gt;6)]-N-acetyl-beta-D-glucosaminyl-(1-&gt;3)-beta-D-galactosyl-(1-&gt;4)-beta-D-glucosyl-(1&lt;-&gt;1')-N-acyl-sphing-4-enine + CMP + H(+). It participates in glycolipid biosynthesis. Predominantly catalyzes the biosynthesis of ganglioside GD1alpha from GM1b in the brain, by transferring the sialyl group (N-acetyl-alpha-neuraminyl or NeuAc) from CMP-NeuAc to the GalNAc residue on the NeuAc-alpha-2,3-Gal-beta-1,3-GalNAc sequence of GM1b. GD1alpha is a critical molecule in the communication and interaction between neuronal cells and their supportive cells, particularly in brain tissues, and functions as an adhesion molecule in the process of metastasis. Also shows activity towards sialyl Lc4Cer (N-acetyl-alpha-neuraminosyl-(2-&gt;3)-beta-D-galactosyl-(1-&gt;3)-N-acetyl-beta-D-glucosaminyl-(1-&gt;3)-beta-D-galactosyl-(1-&gt;4)-beta-D-glucosyl-(1&lt;-&gt;1')-N-acyl-sphing-4-enine) generating disialyl Lc4Cer, which can lead to the synthesis of disialyl Lewis a (Le(a)), suggested to be a cancer-associated antigen. The chain is Alpha-N-acetylgalactosaminide alpha-2,6-sialyltransferase 5 (ST6GALNAC5) from Homo sapiens (Human).